A 124-amino-acid chain; its full sequence is Holo-[acyl-carrier-protein] synthase (124 aa).

2 residues coordinate Mg(2+): aspartate 5 and glutamate 51.

Belongs to the P-Pant transferase superfamily. AcpS family. It depends on Mg(2+) as a cofactor.

It localises to the cytoplasm. It catalyses the reaction apo-[ACP] + CoA = holo-[ACP] + adenosine 3',5'-bisphosphate + H(+). In terms of biological role, transfers the 4'-phosphopantetheine moiety from coenzyme A to a Ser of acyl-carrier-protein. This Hydrogenobaculum sp. (strain Y04AAS1) protein is Holo-[acyl-carrier-protein] synthase.